Consider the following 259-residue polypeptide: uncharacterized protein (259 aa).

An HD domain is found at 51–173; sequence GKTHAKIVAN…IAVADGTDMT (123 aa).

This is an uncharacterized protein from Methanocaldococcus jannaschii (strain ATCC 43067 / DSM 2661 / JAL-1 / JCM 10045 / NBRC 100440) (Methanococcus jannaschii).